The sequence spans 509 residues: Tyrosine-protein kinase Lck (509 aa).

The N-myristoyl glycine moiety is linked to residue glycine 2. Residues 2-72 (GCGCSSHPED…DNLVIALHSY (71 aa)) are interactions with CD4 and CD8. 2 S-palmitoyl cysteine lipidation sites follow: cysteine 3 and cysteine 5. The SH3 domain occupies 61-121 (LQDNLVIALH…PFNFVAKANS (61 aa)). Residue lysine 99 forms a Glycyl lysine isopeptide (Lys-Gly) (interchain with G-Cter in ubiquitin) linkage. The residue at position 102 (serine 102) is a Phosphoserine. The SH2 domain occupies 127–224 (WFFKNLSRKD…GLCTRLSRPC (98 aa)). Residues 154-242 (RESESTAGSF…WWEDEWEVPR (89 aa)) form an interaction with PTPRH region. The residue at position 159 (threonine 159) is a Phosphothreonine. Position 162 is a phosphoserine (serine 162). Tyrosine 192 bears the Phosphotyrosine mark. Position 194 is a phosphoserine (serine 194). The Protein kinase domain maps to 245–498 (LKLVERLGAG…YLRSVLEDFF (254 aa)). ATP is bound by residues 251–259 (LGAGQFGEV) and lysine 273. Lysine 276 participates in a covalent cross-link: Glycyl lysine isopeptide (Lys-Gly) (interchain with G-Cter in ubiquitin). Aspartate 364 functions as the Proton acceptor in the catalytic mechanism. Tyrosine 394 carries the phosphotyrosine; by autocatalysis modification. Tyrosine 505 bears the Phosphotyrosine; by CSK mark.

The protein belongs to the protein kinase superfamily. Tyr protein kinase family. SRC subfamily. Binds to the cytoplasmic domain of cell surface receptors, such as AXL, CD2, CD4, CD5, CD8, CD44, CD45 and CD122. Also binds to effector molecules, such as PI4K, VAV1, RASA1, FYB1 and to other protein kinases including CDK1, RAF1, ZAP70 and SYK. Binds to phosphatidylinositol 3'-kinase (PI3K) from T-lymphocytes through its SH3 domain and to the tyrosine phosphorylated form of KHDRBS1/p70 through its SH2 domain. This interaction inhibits its tyrosine-kinase activity. Interacts with SQSTM1. Interacts with phosphorylated LIME1. Interacts with CBLB and PTPRH. Interacts with RUNX3. Forms a signaling complex with EPHA1, PTK2B and PI3-KINASE; upon activation by EFNA1 which may regulate T-lymphocyte migration. Associates with ZAP70 and RHOH; these interactions allow LCK-mediated RHOH and CD3 subunit phosphorylation in the presence of functional ZAP70. Interacts with UNC119; this interaction plays a crucial role in activation of LCK. Interacts with CEACAM1 (via cytoplasmic domain); mediates CEACAM1 phosphorylation resulting in PTPN6 recruitment that dephosphorylates TCR stimulation-induced CD247 and ZAP70. Interacts with CD160. Interacts with CD48. In terms of assembly, (Microbial infection) Interacts with herpes simplex virus 1 UL46; this interaction activates LCK. As to quaternary structure, (Microbial infection) Interacts with HIV-1 Nef through its SH3 domain. Post-translationally, autophosphorylated on Tyr-394, increasing enzymatic activity, this site is dephosphorylated by PTN22. Phosphorylated on Tyr-505 by CSK, decreasing activity. Dephosphorylated by PTPRC/CD45. Dephosphorylation at Tyr-394 by PTPN2 negatively regulates T-cell receptor signaling. Dephosphorylation at Tyr-394 by DUSP22 negatively regulates T-cell receptor signaling. In terms of processing, myristoylation is required prior to palmitoylation. Palmitoylation regulates association with the plasma membrane and could be mediated by ZDHHC2. Post-translationally, 'Lys-63'-linked ubiquitinated at Lys-99 and Lys-276 by UBR2; this modification is required for autophosphorylation at Tyr-394. As to expression, expressed specifically in lymphoid cells.

Its subcellular location is the cell membrane. The protein resides in the cytoplasm. It is found in the cytosol. The enzyme catalyses L-tyrosyl-[protein] + ATP = O-phospho-L-tyrosyl-[protein] + ADP + H(+). The relative activities of the inhibitory tyrosine-protein kinase CSK and the activating tyrosine-protein phosphatase PTPRC/CD45 determine the level of LCK activity. These interactions allow rapid and efficient activation of LCK in response to TCR stimulation. Non-receptor tyrosine-protein kinase that plays an essential role in the selection and maturation of developing T-cells in the thymus and in the function of mature T-cells. Plays a key role in T-cell antigen receptor (TCR)-linked signal transduction pathways. Constitutively associated with the cytoplasmic portions of the CD4 and CD8 surface receptors. Association of the TCR with a peptide antigen-bound MHC complex facilitates the interaction of CD4 and CD8 with MHC class II and class I molecules, respectively, thereby recruiting the associated LCK protein to the vicinity of the TCR/CD3 complex. LCK then phosphorylates tyrosine residues within the immunoreceptor tyrosine-based activation motifs (ITAM) of the cytoplasmic tails of the TCR-gamma chains and CD3 subunits, initiating the TCR/CD3 signaling pathway. Once stimulated, the TCR recruits the tyrosine kinase ZAP70, that becomes phosphorylated and activated by LCK. Following this, a large number of signaling molecules are recruited, ultimately leading to lymphokine production. LCK also contributes to signaling by other receptor molecules. Associates directly with the cytoplasmic tail of CD2, which leads to hyperphosphorylation and activation of LCK. Also plays a role in the IL2 receptor-linked signaling pathway that controls the T-cell proliferative response. Binding of IL2 to its receptor results in increased activity of LCK. Is expressed at all stages of thymocyte development and is required for the regulation of maturation events that are governed by both pre-TCR and mature alpha beta TCR. Phosphorylates other substrates including RUNX3, PTK2B/PYK2, the microtubule-associated protein MAPT, RHOH or TYROBP. Interacts with FYB2. This is Tyrosine-protein kinase Lck (LCK) from Homo sapiens (Human).